The primary structure comprises 540 residues: ATP-dependent RNA helicase DBP3 (540 aa).

Positions M1–D35 are enriched in basic and acidic residues. The tract at residues M1–K89 is disordered. A compositionally biased stretch (basic residues) spans K36 to K52. Composition is skewed to basic and acidic residues over residues E53–D62 and D68–E79. A Q motif motif is present at residues L130–A156. Residues W159–V332 form the Helicase ATP-binding domain. A172–T179 contacts ATP. The short motif at D279–D282 is the DEAD box element. In terms of domain architecture, Helicase C-terminal spans K361 to G510.

The protein belongs to the DEAD box helicase family. DDX5/DBP2 subfamily.

It localises to the nucleus. The protein resides in the nucleolus. It catalyses the reaction ATP + H2O = ADP + phosphate + H(+). In terms of biological role, ATP-dependent RNA helicase required for 60S ribosomal subunit synthesis. Involved in efficient pre-rRNA processing, predominantly at site A3, which is necessary for the normal formation of 25S and 5.8S rRNAs. In Candida glabrata (strain ATCC 2001 / BCRC 20586 / JCM 3761 / NBRC 0622 / NRRL Y-65 / CBS 138) (Yeast), this protein is ATP-dependent RNA helicase DBP3 (DBP3).